The chain runs to 129 residues: Large ribosomal subunit protein bL20 (129 aa).

It belongs to the bacterial ribosomal protein bL20 family.

In terms of biological role, binds directly to 23S ribosomal RNA and is necessary for the in vitro assembly process of the 50S ribosomal subunit. It is not involved in the protein synthesizing functions of that subunit. This chain is Large ribosomal subunit protein bL20, found in Mycolicibacterium smegmatis (strain ATCC 700084 / mc(2)155) (Mycobacterium smegmatis).